The sequence spans 157 residues: Protein Smg homolog (157 aa).

This sequence belongs to the Smg family.

The chain is Protein Smg homolog from Shewanella halifaxensis (strain HAW-EB4).